Consider the following 609-residue polypeptide: Major facilitator superfamily domain-containing protein 6-like protein A (609 aa).

2 helical membrane passes run 41–61 and 78–98; these read LGLG…VHLL and FFIM…AYYP. Residues 201–241 are disordered; sequence SGKAQKVMSSKSAASNSKQRSSLNNHTSPYATHPNVSHHPS. Residues 207 to 230 show a composition bias toward polar residues; that stretch reads VMSSKSAASNSKQRSSLNNHTSPY. Helical transmembrane passes span 265–285, 307–327, 340–360, 388–408, 420–440, 452–472, 475–495, 513–535, and 541–561; these read IFLI…PLEW, LWIW…FLVD, VFFH…LSTL, IVLT…TQNF, ELYM…LYFF, WMVA…SFLW, WSVL…WWAI, LALR…GFII, and AVLY…FLLV.

The protein belongs to the major facilitator superfamily. MFSD6 family.

It is found in the membrane. The protein is Major facilitator superfamily domain-containing protein 6-like protein A (mfsd6l-a) of Xenopus laevis (African clawed frog).